Consider the following 227-residue polypeptide: Protein MobD (227 aa).

The protein is Protein MobD (mobD) of Acidithiobacillus ferrooxidans (Thiobacillus ferrooxidans).